A 390-amino-acid chain; its full sequence is Transforming growth factor beta-1 proprotein (390 aa).

The N-terminal stretch at 1-29 is a signal peptide; it reads MPPSGLRLLPLLLPLPWLLVLTPGRPAAG. Residues 30-74 form a straightjacket domain region; the sequence is LSTCKTIDMELVKRKRIEAIRGQILSKLRLASPPSQGEVPPGPLP. An arm domain region spans residues 75–271; the sequence is EAVLALYNST…ATPLERAQHL (197 aa). 3 N-linked (GlcNAc...) asparagine glycosylation sites follow: Asn-82, Asn-136, and Asn-176. The tract at residues 226–252 is bowtie tail; sequence DSKDNKLHVEINGISPKRRGDLGTIHD. A Cell attachment site motif is present at residues 244 to 246; that stretch reads RGD. Disulfide bonds link Cys-285/Cys-294, Cys-293/Cys-356, Cys-322/Cys-387, and Cys-326/Cys-389.

The protein belongs to the TGF-beta family. Homodimer; disulfide-linked. Interacts with the serine proteases, HTRA1 and HTRA3: the interaction with either inhibits TGFB1-mediated signaling and the HTRA protease activity is required for this inhibition. May interact with THSD4; this interaction may lead to sequestration by FBN1 microfibril assembly and attenuation of TGFB signaling. Interacts with CD109, DPT and ASPN. Interacts with EFEMP2. Interacts with TSKU; the interaction contributes to regulation of the hair cycle. Interacts with TGFBR3. In terms of assembly, homodimer; disulfide-linked. Interacts with transforming growth factor beta-1 (TGF-beta-1) chain; interaction is non-covalent and maintains TGF-beta-1 in a latent state; each latency-associated peptide (LAP) monomer interacts with TGF-beta-1 in the other monomer. Interacts with LTBP1; leading to regulation of TGF-beta-1 activation. Interacts with LRRC32/GARP; leading to regulation of TGF-beta-1 activation on the surface of activated regulatory T-cells (Tregs). Interacts with LRRC33/NRROS; leading to regulation of TGF-beta-1 activation in macrophages and microglia. Interacts (via cell attachment site) with integrins ITGAV and ITGB6 (ITGAV:ITGB6), leading to release of the active TGF-beta-1. Interacts with NREP; the interaction results in a decrease in TGFB1 autoinduction. Interacts with HSP90AB1; inhibits latent TGFB1 activation. As to quaternary structure, homodimer; disulfide-linked. Interacts with TGF-beta receptors (TGFBR1 and TGFBR2), leading to signal transduction. Post-translationally, transforming growth factor beta-1 proprotein: The precursor proprotein is cleaved in the Golgi apparatus by FURIN to form Transforming growth factor beta-1 (TGF-beta-1) and Latency-associated peptide (LAP) chains, which remain non-covalently linked, rendering TGF-beta-1 inactive. In terms of processing, N-glycosylated. Deglycosylation leads to activation of Transforming growth factor beta-1 (TGF-beta-1); mechanisms triggering deglycosylation-driven activation of TGF-beta-1 are however unclear. Expressed in cardiomyocytes. Weakly expressed in the mammary glands, with a slight increase of expression following onset of involution.

It is found in the secreted. The protein resides in the extracellular space. It localises to the extracellular matrix. Functionally, transforming growth factor beta-1 proprotein: Precursor of the Latency-associated peptide (LAP) and Transforming growth factor beta-1 (TGF-beta-1) chains, which constitute the regulatory and active subunit of TGF-beta-1, respectively. Required to maintain the Transforming growth factor beta-1 (TGF-beta-1) chain in a latent state during storage in extracellular matrix. Associates non-covalently with TGF-beta-1 and regulates its activation via interaction with 'milieu molecules', such as LTBP1, LRRC32/GARP and LRRC33/NRROS, that control activation of TGF-beta-1. Interaction with LRRC33/NRROS regulates activation of TGF-beta-1 in macrophages and microglia. Interaction with LRRC32/GARP controls activation of TGF-beta-1 on the surface of activated regulatory T-cells (Tregs). Interaction with integrins (ITGAV:ITGB6 or ITGAV:ITGB8) results in distortion of the Latency-associated peptide chain and subsequent release of the active TGF-beta-1. Its function is as follows. Multifunctional protein that regulates the growth and differentiation of various cell types and is involved in various processes, such as normal development, immune function, microglia function and responses to neurodegeneration. Activation into mature form follows different steps: following cleavage of the proprotein in the Golgi apparatus, Latency-associated peptide (LAP) and Transforming growth factor beta-1 (TGF-beta-1) chains remain non-covalently linked rendering TGF-beta-1 inactive during storage in extracellular matrix. At the same time, LAP chain interacts with 'milieu molecules', such as LTBP1, LRRC32/GARP and LRRC33/NRROS that control activation of TGF-beta-1 and maintain it in a latent state during storage in extracellular milieus. TGF-beta-1 is released from LAP by integrins (ITGAV:ITGB6 or ITGAV:ITGB8): integrin-binding to LAP stabilizes an alternative conformation of the LAP bowtie tail and results in distortion of the LAP chain and subsequent release of the active TGF-beta-1. Once activated following release of LAP, TGF-beta-1 acts by binding to TGF-beta receptors (TGFBR1 and TGFBR2), which transduce signal. While expressed by many cells types, TGF-beta-1 only has a very localized range of action within cell environment thanks to fine regulation of its activation by Latency-associated peptide chain (LAP) and 'milieu molecules'. Plays an important role in bone remodeling: acts as a potent stimulator of osteoblastic bone formation, causing chemotaxis, proliferation and differentiation in committed osteoblasts. Can promote either T-helper 17 cells (Th17) or regulatory T-cells (Treg) lineage differentiation in a concentration-dependent manner. At high concentrations, leads to FOXP3-mediated suppression of RORC and down-regulation of IL-17 expression, favoring Treg cell development. At low concentrations in concert with IL-6 and IL-21, leads to expression of the IL-17 and IL-23 receptors, favoring differentiation to Th17 cells. Stimulates sustained production of collagen through the activation of CREB3L1 by regulated intramembrane proteolysis (RIP). Mediates SMAD2/3 activation by inducing its phosphorylation and subsequent translocation to the nucleus. Positively regulates odontoblastic differentiation in dental papilla cells, via promotion of IPO7-mediated translocation of phosphorylated SMAD2 to the nucleus and subsequent transcription of target genes. Can induce epithelial-to-mesenchymal transition (EMT) and cell migration in various cell types. The chain is Transforming growth factor beta-1 proprotein from Mus musculus (Mouse).